The following is a 78-amino-acid chain: DNA gyrase inhibitor YacG (78 aa).

Positions 7, 10, 26, and 30 each coordinate Zn(2+).

It belongs to the DNA gyrase inhibitor YacG family. As to quaternary structure, interacts with GyrB. The cofactor is Zn(2+).

Its function is as follows. Inhibits all the catalytic activities of DNA gyrase by preventing its interaction with DNA. Acts by binding directly to the C-terminal domain of GyrB, which probably disrupts DNA binding by the gyrase. This is DNA gyrase inhibitor YacG from Colwellia psychrerythraea (strain 34H / ATCC BAA-681) (Vibrio psychroerythus).